Consider the following 428-residue polypeptide: Glutamate-1-semialdehyde 2,1-aminomutase (428 aa).

Lysine 265 bears the N6-(pyridoxal phosphate)lysine mark.

Belongs to the class-III pyridoxal-phosphate-dependent aminotransferase family. HemL subfamily. As to quaternary structure, homodimer. The cofactor is pyridoxal 5'-phosphate.

Its subcellular location is the cytoplasm. The enzyme catalyses (S)-4-amino-5-oxopentanoate = 5-aminolevulinate. The protein operates within porphyrin-containing compound metabolism; protoporphyrin-IX biosynthesis; 5-aminolevulinate from L-glutamyl-tRNA(Glu): step 2/2. This is Glutamate-1-semialdehyde 2,1-aminomutase from Aeromonas hydrophila subsp. hydrophila (strain ATCC 7966 / DSM 30187 / BCRC 13018 / CCUG 14551 / JCM 1027 / KCTC 2358 / NCIMB 9240 / NCTC 8049).